A 568-amino-acid polypeptide reads, in one-letter code: N66 matrix protein (568 aa).

Residues 1-22 (MWRMTTLLHLTALLVLIPLCHC) form the signal peptide. One can recognise an Alpha-carbonic anhydrase domain in the interval 55-567 (AGFSYNRDIC…KHPLRVYKNS (513 aa)). Zn(2+) is bound by residues His-154, His-156, and His-179. Residues 259 to 421 (NGNNGNNGNG…NGYNGDNGNS (163 aa)) form a disordered region. Gly residues predominate over residues 280 to 290 (GNNGNGNGNNG). The segment covering 291 to 318 (YNGNNGYNGNNGNNGNGNNDNNGNDNNG) has biased composition (low complexity). Gly residues-rich tracts occupy residues 319-352 (NNGG…GNNG) and 362-380 (NGNG…GNNG). The N-linked (GlcNAc...) asparagine glycan is linked to Asn-389. The span at 390–413 (GSNGNNGGNGNNGNNGDNGNGDNG) shows a compositional bias: gly residues. 506–507 (TT) contacts substrate. Asn-511 carries an N-linked (GlcNAc...) asparagine glycan.

Belongs to the alpha-carbonic anhydrase family. Homooligomer; disulfide-linked. May also be disulfide-linked to insoluble organic matrix. Requires Zn(2+) as cofactor. As to expression, expressed in both the dorsal region of the mantle and the mantle edge. Is dispersed in calcium carbonate and also linked by disulfide bonds to the organic core of nacre.

Its subcellular location is the secreted. The protein resides in the extracellular space. The protein localises to the extracellular matrix. It catalyses the reaction hydrogencarbonate + H(+) = CO2 + H2O. Functionally, acts as a negative regulator for calcification in the shells of mollusks. May function both as a calcium concentrator and as a carbonic anhydrase required for production of carbonate ions, which are assembled to CaCO(3) at mineralization sites. Is important for shell formation in both the calcitic prismatic layer and the aragonitic nacreous layer. The chain is N66 matrix protein from Pinctada maxima (Silver-lipped pearl oyster).